Consider the following 242-residue polypeptide: MRLIVTKNYEEMSKVAAKEMAEDIKRNPEIVLGLATGGTPVGMYKELIRMYNEGELDFSKVTSINLDEYVGLSGDHDQSYRYFMNTNLFNHINIDKNNTFVPNGLAENVEEECMAYDARIQDMGGIDLQLLGLGANGHIGFNEPGEALSVGTHLTDLKESTIEANARFFDSIDDVPRKAITMGLGGIMKAKKIMVIASGEGKAEVVKAMMSGKITTEIPATMLQMHRDVILIVDEDAAKLLK.

The Proton acceptor; for enolization step role is filled by Asp67. The For ring-opening step role is filled by Asn136. His138 serves as the catalytic Proton acceptor; for ring-opening step. The active-site For ring-opening step is the Glu143.

It belongs to the glucosamine/galactosamine-6-phosphate isomerase family. NagB subfamily.

The catalysed reaction is alpha-D-glucosamine 6-phosphate + H2O = beta-D-fructose 6-phosphate + NH4(+). It participates in amino-sugar metabolism; N-acetylneuraminate degradation; D-fructose 6-phosphate from N-acetylneuraminate: step 5/5. Catalyzes the reversible isomerization-deamination of glucosamine 6-phosphate (GlcN6P) to form fructose 6-phosphate (Fru6P) and ammonium ion. The protein is Glucosamine-6-phosphate deaminase of Clostridium perfringens (strain ATCC 13124 / DSM 756 / JCM 1290 / NCIMB 6125 / NCTC 8237 / Type A).